We begin with the raw amino-acid sequence, 340 residues long: tRNA N6-adenosine threonylcarbamoyltransferase (340 aa).

The Fe cation site is built by His111 and His115. Substrate is bound by residues 134 to 138 (LVSGG), Asp167, Gly180, and Asn276. Asp304 contacts Fe cation.

It belongs to the KAE1 / TsaD family. Fe(2+) is required as a cofactor.

Its subcellular location is the cytoplasm. The catalysed reaction is L-threonylcarbamoyladenylate + adenosine(37) in tRNA = N(6)-L-threonylcarbamoyladenosine(37) in tRNA + AMP + H(+). Required for the formation of a threonylcarbamoyl group on adenosine at position 37 (t(6)A37) in tRNAs that read codons beginning with adenine. Is involved in the transfer of the threonylcarbamoyl moiety of threonylcarbamoyl-AMP (TC-AMP) to the N6 group of A37, together with TsaE and TsaB. TsaD likely plays a direct catalytic role in this reaction. This is tRNA N6-adenosine threonylcarbamoyltransferase from Helicobacter pylori (strain ATCC 700392 / 26695) (Campylobacter pylori).